The following is a 158-amino-acid chain: Botcinic acid biosynthesis cluster B protein 16 (158 aa).

The protein operates within polyketide biosynthesis. In terms of biological role, part of the gene cluster B that mediates the biosynthesis of botcinic acid and its botcinin derivatives, acetate-derived polyketides that contribute to virulence when combined with the sesquiterpene botrydial. Botcinic acid and its derivatives have been shown to induce chlorosis and necrosis during host plant infection, but also have antifungal activities. Two polyketide synthases, BOA6 and BOA9, are involved in the biosynthesis of botcinins. BOA6 mediates the formation of the per-methylated tetraketide core by condensation of four units of malonyl-CoA with one unit of acetyl-CoA, which would be methylated in activated methylene groups to yield a bicyclic acid intermediate that could then either be converted to botrylactone derivatives or lose the starter acetate unit through a retro-Claisen type C-C bond cleavage to yield botcinin derivatives. The second polyketide synthase, BOA9, is probably required for the biosynthesis of the tetraketide side chain of botcinins. The methyltransferase (MT) domain within BOA6 is probably responsible for the incorporation of four methyl groups. The trans-enoyl reductase BOA5 might take over the enoyl reductase function of BOA6 that misses an ER domain. The monooxygenases BOA2, BOA3 and BOA4 might be involved in further hydroxylations at C4, C5 and C8, whereas BOA7, close to BOA9, could potentially be involved in the hydroxylation at C4 in the side chain of botcinins. This chain is Botcinic acid biosynthesis cluster B protein 16, found in Botryotinia fuckeliana (strain B05.10) (Noble rot fungus).